Here is a 307-residue protein sequence, read N- to C-terminus: Probable deoxyhypusine synthase (307 aa).

The active-site Nucleophile is the Lys-278.

Belongs to the deoxyhypusine synthase family. The cofactor is NAD(+).

The catalysed reaction is [eIF5A protein]-L-lysine + spermidine = [eIF5A protein]-deoxyhypusine + propane-1,3-diamine. It functions in the pathway protein modification; eIF5A hypusination. Catalyzes the NAD-dependent oxidative cleavage of spermidine and the subsequent transfer of the butylamine moiety of spermidine to the epsilon-amino group of a specific lysine residue of the eIF-5A precursor protein to form the intermediate deoxyhypusine residue. The protein is Probable deoxyhypusine synthase (dys) of Methanothermobacter thermautotrophicus (strain ATCC 29096 / DSM 1053 / JCM 10044 / NBRC 100330 / Delta H) (Methanobacterium thermoautotrophicum).